The following is a 444-amino-acid chain: Adenylosuccinate synthetase (444 aa).

GTP-binding positions include 12–18 and 40–42; these read GDEGKGK and GHT. Aspartate 13 functions as the Proton acceptor in the catalytic mechanism. 2 residues coordinate Mg(2+): aspartate 13 and glycine 40. Residues 13-16, 38-41, threonine 128, arginine 142, glutamine 223, threonine 238, and arginine 302 each bind IMP; these read DEGK and NAGH. The active-site Proton donor is the histidine 41. Residue 298-304 participates in substrate binding; sequence TTTGRRR. GTP is bound by residues arginine 304, 330–332, and 412–414; these read KLD and SLG.

This sequence belongs to the adenylosuccinate synthetase family. Homodimer. It depends on Mg(2+) as a cofactor.

Its subcellular location is the cytoplasm. The catalysed reaction is IMP + L-aspartate + GTP = N(6)-(1,2-dicarboxyethyl)-AMP + GDP + phosphate + 2 H(+). Its pathway is purine metabolism; AMP biosynthesis via de novo pathway; AMP from IMP: step 1/2. In terms of biological role, plays an important role in the de novo pathway of purine nucleotide biosynthesis. Catalyzes the first committed step in the biosynthesis of AMP from IMP. The polypeptide is Adenylosuccinate synthetase (Synechococcus elongatus (strain ATCC 33912 / PCC 7942 / FACHB-805) (Anacystis nidulans R2)).